The chain runs to 148 residues: Cytochrome c6, chloroplastic (148 aa).

The N-terminal 58 residues, 1 to 58, are a transit peptide targeting the chloroplast; it reads MLQLANRSVRAKAARASQSARSVSCAAAKRGADVAPLTSALAVTASILLTTGAASASA. Heme c is bound by residues Cys-72, Cys-75, His-76, and Met-118.

This sequence belongs to the cytochrome c family. PetJ subfamily. As to quaternary structure, thought to function as a monomer, however 2 crystal forms are observed; a homodimer and homotrimer, suggesting the protein oligomerizes. Post-translationally, binds 1 heme c group covalently per subunit.

It is found in the plastid. Its subcellular location is the chloroplast thylakoid lumen. Functions as an electron carrier between membrane-bound cytochrome b6-f and photosystem I in oxygenic photosynthesis. The polypeptide is Cytochrome c6, chloroplastic (petJ) (Chlamydomonas reinhardtii (Chlamydomonas smithii)).